A 154-amino-acid polypeptide reads, in one-letter code: MNIIEGKLNLDSNTKIAIINARFNHIITDRLVEGAKDAFLRHGGKEENLSLILVPGAFELPYALKKAIESKKFDAICCVGAVIRGSTPHFDYVSAETTKGIANVSLNHNIPVSFGVLTTDTIEQAIERAGSKAGNKGFEAMTTVIEMLNLSKEL.

5-amino-6-(D-ribitylamino)uracil is bound by residues F23, 57–59 (AFE), and 81–83 (AVI). Residue 86-87 (ST) coordinates (2S)-2-hydroxy-3-oxobutyl phosphate. H89 (proton donor) is an active-site residue. A 5-amino-6-(D-ribitylamino)uracil-binding site is contributed by F114. R128 serves as a coordination point for (2S)-2-hydroxy-3-oxobutyl phosphate.

The protein belongs to the DMRL synthase family.

The enzyme catalyses (2S)-2-hydroxy-3-oxobutyl phosphate + 5-amino-6-(D-ribitylamino)uracil = 6,7-dimethyl-8-(1-D-ribityl)lumazine + phosphate + 2 H2O + H(+). It functions in the pathway cofactor biosynthesis; riboflavin biosynthesis; riboflavin from 2-hydroxy-3-oxobutyl phosphate and 5-amino-6-(D-ribitylamino)uracil: step 1/2. Catalyzes the formation of 6,7-dimethyl-8-ribityllumazine by condensation of 5-amino-6-(D-ribitylamino)uracil with 3,4-dihydroxy-2-butanone 4-phosphate. This is the penultimate step in the biosynthesis of riboflavin. This Campylobacter jejuni subsp. jejuni serotype O:2 (strain ATCC 700819 / NCTC 11168) protein is 6,7-dimethyl-8-ribityllumazine synthase.